The following is a 345-amino-acid chain: Eukaryotic translation initiation factor 3 subunit F (345 aa).

One can recognise an MPN domain in the interval 30 to 166 (VVIHPQALFS…TRAYISAPVG (137 aa)). The interval 308–345 (GGESGNAESGQRGGQRGGKGGRGGQQRTQDRSGEEARA) is disordered. A compositionally biased stretch (gly residues) spans 318–331 (QRGGQRGGKGGRGG). Positions 335–345 (TQDRSGEEARA) are enriched in basic and acidic residues.

This sequence belongs to the eIF-3 subunit F family. As to quaternary structure, component of the eukaryotic translation initiation factor 3 (eIF-3) complex.

It is found in the cytoplasm. Its function is as follows. Component of the eukaryotic translation initiation factor 3 (eIF-3) complex, which is involved in protein synthesis of a specialized repertoire of mRNAs and, together with other initiation factors, stimulates binding of mRNA and methionyl-tRNAi to the 40S ribosome. The eIF-3 complex specifically targets and initiates translation of a subset of mRNAs involved in cell proliferation. In Aspergillus oryzae (strain ATCC 42149 / RIB 40) (Yellow koji mold), this protein is Eukaryotic translation initiation factor 3 subunit F.